The sequence spans 339 residues: MNALNAAMTVIGAGSYGTALAITLARNGHHVVLWGHDPKHIATLQHDRCNAAFLPDVPFPDTLHLESDLATALAASRDILVVVPSHVFGQVLRQIKPLMRSDARLVWATKGLEAETGRLLQDVAREALGDDIPLAVISGPTFAKELAAGLPTAISLAATDPQFAEDLQRLLHCGKSFRVYINPDFIGVQLGGAVKNVIAIGAGMSDGIGFGANARTALITRGLVEMSRLGAALGADPETFMGMAGLGDLVLTCTDNQSRNRRFGMMLGQGMDVQSAQDKIGQVVEGYRNTKEVRVLAQRLGVEMPITEEIYQVLYCGKIAREAALTLLGRARKDERSSN.

NADPH-binding residues include serine 15, tyrosine 16, histidine 36, and lysine 110. Residues lysine 110, glycine 139, and threonine 141 each contribute to the sn-glycerol 3-phosphate site. Alanine 143 contacts NADPH. Sn-glycerol 3-phosphate-binding residues include lysine 195, aspartate 248, serine 258, arginine 259, and asparagine 260. The Proton acceptor role is filled by lysine 195. Position 259 (arginine 259) interacts with NADPH. NADPH contacts are provided by valine 283 and glutamate 285.

Belongs to the NAD-dependent glycerol-3-phosphate dehydrogenase family.

Its subcellular location is the cytoplasm. The catalysed reaction is sn-glycerol 3-phosphate + NAD(+) = dihydroxyacetone phosphate + NADH + H(+). It catalyses the reaction sn-glycerol 3-phosphate + NADP(+) = dihydroxyacetone phosphate + NADPH + H(+). It participates in membrane lipid metabolism; glycerophospholipid metabolism. Functionally, catalyzes the reduction of the glycolytic intermediate dihydroxyacetone phosphate (DHAP) to sn-glycerol 3-phosphate (G3P), the key precursor for phospholipid synthesis. The protein is Glycerol-3-phosphate dehydrogenase [NAD(P)+] of Klebsiella pneumoniae subsp. pneumoniae (strain ATCC 700721 / MGH 78578).